Consider the following 199-residue polypeptide: MVLFSEDHIQETRRRGRIEVICGSMFSGKTEELIRRMKRAKFARQRVEIFKPAIDTRYSEGDVVSHDSNSISSTPIDSSASILLFTSEIDVVGIDEAQFFDSGLIDVCNQLANNGVRVIIAGLDMDFKGVPFGPMPALCAIADEVSKVHAICVKCGQLASFSHRTVKNDKQVLLGETAQYEPLCRECYQRALQEDREKS.

ATP is bound by residues 23–30 (GSMFSGKT) and 95–98 (DEAQ). Residue E96 is the Proton acceptor of the active site. Residues C152, C155, C184, and C187 each contribute to the Zn(2+) site.

It belongs to the thymidine kinase family. Homotetramer.

Its subcellular location is the cytoplasm. The enzyme catalyses thymidine + ATP = dTMP + ADP + H(+). This chain is Thymidine kinase, found in Bacteroides fragilis (strain YCH46).